Reading from the N-terminus, the 306-residue chain is HORMA domain-containing protein 2 (306 aa).

Residues 29 to 232 form the HORMA domain; that stretch reads HESLIMVKKL…TGFHSMKVKV (204 aa).

As to quaternary structure, interacts with HORMAD1. In terms of processing, phosphorylated in a SPO11-dependent manner.

It is found in the nucleus. It localises to the chromosome. Essential for synapsis surveillance during meiotic prophase via the recruitment of ATR activity. Plays a key role in the male mid-pachytene checkpoint and the female meiotic prophase checkpoint: required for efficient build-up of ATR activity on unsynapsed chromosome regions, a process believed to form the basis of meiotic silencing of unsynapsed chromatin (MSUC) and meiotic prophase quality control in both sexes. Required for the DNA double-strand break-independent, BRCA1-dependent activation of ATR on the sex chromosomes that is essential for normal sex body formation. This is HORMA domain-containing protein 2 (HORMAD2) from Bos taurus (Bovine).